The sequence spans 592 residues: Aspartate--tRNA(Asp/Asn) ligase (592 aa).

Glutamate 182 contributes to the L-aspartate binding site. Positions 206–209 (QIFK) are aspartate. Arginine 228 contributes to the L-aspartate binding site. Residues 228–230 (RDE) and glutamine 237 each bind ATP. An L-aspartate-binding site is contributed by histidine 455. Glutamate 489 contributes to the ATP binding site. Arginine 496 contacts L-aspartate. 541-544 (GLDR) provides a ligand contact to ATP.

The protein belongs to the class-II aminoacyl-tRNA synthetase family. Type 1 subfamily. In terms of assembly, homodimer.

Its subcellular location is the cytoplasm. It carries out the reaction tRNA(Asx) + L-aspartate + ATP = L-aspartyl-tRNA(Asx) + AMP + diphosphate. In terms of biological role, aspartyl-tRNA synthetase with relaxed tRNA specificity since it is able to aspartylate not only its cognate tRNA(Asp) but also tRNA(Asn). Reaction proceeds in two steps: L-aspartate is first activated by ATP to form Asp-AMP and then transferred to the acceptor end of tRNA(Asp/Asn). The polypeptide is Aspartate--tRNA(Asp/Asn) ligase (Thermoanaerobacter pseudethanolicus (strain ATCC 33223 / 39E) (Clostridium thermohydrosulfuricum)).